The chain runs to 195 residues: Large ribosomal subunit protein uL5 (195 aa).

Belongs to the universal ribosomal protein uL5 family. In terms of assembly, part of the 50S ribosomal subunit; part of the 5S rRNA/L5/L18/L25 subcomplex. Contacts the 5S rRNA and the P site tRNA. Forms a bridge to the 30S subunit in the 70S ribosome.

Its function is as follows. This is one of the proteins that bind and probably mediate the attachment of the 5S RNA into the large ribosomal subunit, where it forms part of the central protuberance. In the 70S ribosome it contacts protein S13 of the 30S subunit (bridge B1b), connecting the 2 subunits; this bridge is implicated in subunit movement. Contacts the P site tRNA; the 5S rRNA and some of its associated proteins might help stabilize positioning of ribosome-bound tRNAs. The polypeptide is Large ribosomal subunit protein uL5 (Pelodictyon phaeoclathratiforme (strain DSM 5477 / BU-1)).